The primary structure comprises 155 residues: Endoribonuclease YbeY (155 aa).

Residues histidine 119, histidine 123, and histidine 129 each contribute to the Zn(2+) site.

Belongs to the endoribonuclease YbeY family. Zn(2+) is required as a cofactor.

It is found in the cytoplasm. In terms of biological role, single strand-specific metallo-endoribonuclease involved in late-stage 70S ribosome quality control and in maturation of the 3' terminus of the 16S rRNA. The sequence is that of Endoribonuclease YbeY from Mycoplasmopsis synoviae (strain 53) (Mycoplasma synoviae).